The sequence spans 119 residues: Beta-2-microglobulin (119 aa).

The N-terminal stretch at 1-20 (MFRSVALAVLALLFLSGLEA) is a signal peptide. One can recognise an Ig-like C1-type domain in the interval 25–114 (PKIQVYSRHP…VTLSGPRTVK (90 aa)). Cys45 and Cys100 are joined by a disulfide.

It belongs to the beta-2-microglobulin family. As to quaternary structure, heterodimer of an alpha chain and a beta chain. Beta-2-microglobulin is the beta-chain of major histocompatibility complex class I molecules.

The protein localises to the secreted. Functionally, component of the class I major histocompatibility complex (MHC). Involved in the presentation of peptide antigens to the immune system. The chain is Beta-2-microglobulin (B2M) from Chlorocebus aethiops (Green monkey).